We begin with the raw amino-acid sequence, 192 residues long: MEALRQKVKEDGVVIGEKILKVDGFLNHQIDAQLMYDIGETFYEQFKDQKVTKILTVEASGIAPAIMVAYKFGVPCLFAKKAKPNTLNKGFYQTDIHSFTKDKTNSVIISEEFLDEHDRVLIIDDFLANGDASLGLNRLVHQAGAETVGVGIVVEKSFQQGRTRLEEAGLKVSSLCEVASLSGNKVTLVGEE.

Leu-20 and Asn-27 together coordinate xanthine. Ala-128–Ala-132 contacts 5-phospho-alpha-D-ribose 1-diphosphate. Lys-156 lines the xanthine pocket.

This sequence belongs to the purine/pyrimidine phosphoribosyltransferase family. Xpt subfamily. Homodimer.

The protein localises to the cytoplasm. It carries out the reaction XMP + diphosphate = xanthine + 5-phospho-alpha-D-ribose 1-diphosphate. Its pathway is purine metabolism; XMP biosynthesis via salvage pathway; XMP from xanthine: step 1/1. In terms of biological role, converts the preformed base xanthine, a product of nucleic acid breakdown, to xanthosine 5'-monophosphate (XMP), so it can be reused for RNA or DNA synthesis. The polypeptide is Xanthine phosphoribosyltransferase (Staphylococcus carnosus (strain TM300)).